A 440-amino-acid polypeptide reads, in one-letter code: 6-phospho-alpha-glucosidase (440 aa).

4–70 (FSIVVAGGGS…PDINFVYTTD (67 aa)) is an NAD(+) binding site. 2 residues coordinate substrate: R93 and N147. A Mn(2+)-binding site is contributed by C169. D170 functions as the Proton donor in the catalytic mechanism. Residue H200 coordinates Mn(2+). Y263 functions as the Proton acceptor in the catalytic mechanism. Substrate is bound at residue R283.

The protein belongs to the glycosyl hydrolase 4 family. As to quaternary structure, homodimer. It depends on NAD(+) as a cofactor. Mn(2+) serves as cofactor.

It functions in the pathway glycan degradation; palatinose degradation. Its function is as follows. In vitro, readily hydrolyzes p-nitrophenyl-alpha-D-glucopyranoside 6-phosphate (pNPalphaG6P), a chromogenic analog of the phosphorylated isomers of sucrose. In vivo, is probably involved in the degradation of the 6-phosphate derivatives of the sucrose isomers trehalulose, turanose, maltulose and palatinose, catalyzing their hydrolysis into glucose 6-phosphate (G6P) and fructose, which allows the bacterium to use these sugars as energy sources for growth. Is not able to hydrolyze the C2 or C4 chromogenic stereomers (i.e. pNPalpha-mannopyranoside-6P and pNPalpha-galactopyranoside-6P, respectively). In Leptotrichia buccalis (strain ATCC 14201 / DSM 1135 / JCM 12969 / NCTC 10249 / C-1013-b), this protein is 6-phospho-alpha-glucosidase (pagL).